The sequence spans 1451 residues: ABC transporter G family member 32 (1451 aa).

Residues 162-435 form the ABC transporter 1 domain; sequence GNALHISPTR…FELMGFRCPQ (274 aa). 195–202 is a binding site for ATP; that stretch reads GPPGSGKT. Residues 513–725 enclose the ABC transmembrane type-2 1 domain; it reads ALLKANIDRE…AQNAISTNEF (213 aa). A run of 6 helical transmembrane segments spans residues 531 to 551, 563 to 583, 618 to 638, 650 to 670, 674 to 694, and 760 to 780; these read FVYI…MTTF, GTIY…NGFA, IPVT…VVGF, LLLV…AGIG, VVSQ…GGFI, and IGFG…TVAL. The segment at 809 to 835 is disordered; that stretch reads ILDSCEEKKSRKKEQSQSVNQKHWNNT. The segment covering 813-823 has biased composition (basic and acidic residues); sequence CEEKKSRKKEQ. The region spanning 853-1105 is the ABC transporter 2 domain; the sequence is LSFNDIKYSV…KLIEYFEGIE (253 aa). 898-905 contacts ATP; it reads GVSGAGKT. The ABC transmembrane type-2 2 domain maps to 1178-1392; it reads TQCIACLWKH…TLYGLVASQF (215 aa). The next 7 helical transmembrane spans lie at 1197 to 1217, 1237 to 1257, 1285 to 1305, 1312 to 1332, 1342 to 1362, 1373 to 1393, and 1423 to 1443; these read YTAV…TMFW, YAAV…VVVV, LPYI…MIGF, FIWY…FGMM, IAAI…GYLI, WYCW…SQFG, and LVAV…SFAI.

It belongs to the ABC transporter superfamily. ABCG family. PDR (TC 3.A.1.205) subfamily.

It is found in the membrane. Its function is as follows. May be a general defense protein. The polypeptide is ABC transporter G family member 32 (Oryza sativa subsp. japonica (Rice)).